Consider the following 465-residue polypeptide: MLDDRARMEATKKEKVEQILAEFQLQEEDLKKVMSRMQKEMDRGLRLETHEEASVKMLPTYVRSTPEGSEVGDFLSLDLGGTNFRVMLVKVGEGEAGQWSVKTKHQMYSIPEDAMTGTAEMLFDYISECISDFLDKHQMKHKKLPLGFTFSFPVRHEDLDKGILLNWTKGFKASGAEGNNIVGLLRDAIKRRGDFEMDVVAMVNDTVATMISCYYEDRQCEVGMIVGTGCNACYMEEMQNVELVEGDEGRMCVNTEWGAFGDSGELDEFLLEYDRMVDESSANPGQQLYEKIIGGKYMGELVRLVLLKLVDENLLFHGEASEQLRTRGAFETRFVSQVESDSGDRKQIHNILSTLGLRPSVTDCDIVRRACESVSTRAAHMCSAGLAGVINRMRESRSEDVMRITVGVDGSVYKLHPSFKERFHASVRRLTPNCEITFIESEEGSGRGAALVSAVACKKACMLAQ.

Residues 10–454 (ATKKEKVEQI…SGRGAALVSA (445 aa)) enclose the Hexokinase domain. A hexokinase small subdomain region spans residues 67–203 (EGSEVGDFLS…DFEMDVVAMV (137 aa)). 78 to 83 (DLGGTN) contributes to the ATP binding site. Substrate-binding positions include 151-152 (SF), 168-169 (TK), and 204-205 (ND). Positions 204–443 (NDTVATMISC…CEITFIESEE (240 aa)) are hexokinase large subdomain. Threonine 228 provides a ligand contact to ATP. Substrate contacts are provided by asparagine 231, glutamate 256, and glutamate 290. ATP is bound by residues 295-296 (GK), 332-336 (TRFVS), and 411-415 (SVYKL).

The protein belongs to the hexokinase family. In terms of assembly, monomer. Interacts with MIDN; the interaction occurs preferentially at low glucose levels and results in inhibition of hexokinase activity. Interacts with GCKR; leading to sequestration in the nucleus. Expression is restricted to the liver and pancreatic islets (at protein level).

The protein localises to the cytoplasm. It localises to the nucleus. It is found in the mitochondrion. The enzyme catalyses a D-hexose + ATP = a D-hexose 6-phosphate + ADP + H(+). It catalyses the reaction D-fructose + ATP = D-fructose 6-phosphate + ADP + H(+). It carries out the reaction D-glucose + ATP = D-glucose 6-phosphate + ADP + H(+). The catalysed reaction is D-mannose + ATP = D-mannose 6-phosphate + ADP + H(+). It participates in carbohydrate metabolism; hexose metabolism. The protein operates within carbohydrate degradation; glycolysis; D-glyceraldehyde 3-phosphate and glycerone phosphate from D-glucose: step 1/4. With respect to regulation, subject to allosteric regulation. Low glucose and high fructose-6-phosphate triggers association with the inhibitor GCKR followed by sequestration in the nucleus. Functionally, catalyzes the phosphorylation of hexose, such as D-glucose, D-fructose and D-mannose, to hexose 6-phosphate (D-glucose 6-phosphate, D-fructose 6-phosphate and D-mannose 6-phosphate, respectively). Compared to other hexokinases, has a weak affinity for D-glucose, and is effective only when glucose is abundant. Mainly expressed in pancreatic beta cells and the liver and constitutes a rate-limiting step in glucose metabolism in these tissues. Since insulin secretion parallels glucose metabolism and the low glucose affinity of GCK ensures that it can change its enzymatic activity within the physiological range of glucose concentrations, GCK acts as a glucose sensor in the pancreatic beta cell. In pancreas, plays an important role in modulating insulin secretion. In liver, helps to facilitate the uptake and conversion of glucose by acting as an insulin-sensitive determinant of hepatic glucose usage. Required to provide D-glucose 6-phosphate for the synthesis of glycogen. Mediates the initial step of glycolysis by catalyzing phosphorylation of D-glucose to D-glucose 6-phosphate. The protein is Hexokinase-4 of Rattus norvegicus (Rat).